The following is a 272-amino-acid chain: AA9 family lytic polysaccharide monooxygenase G (272 aa).

Residues 1–22 (MKGAGSASFLLTLLSTITRTSA) form the signal peptide. H23 contacts Cu(2+). N-linked (GlcNAc...) asparagine glycosylation is present at N60. 2 disulfide bridges follow: C78–C202 and C121–C125. Cu(2+) is bound at residue H110. O2 contacts are provided by H188 and Q197. Y199 is a Cu(2+) binding site.

It belongs to the polysaccharide monooxygenase AA9 family. Cu(2+) serves as cofactor.

The protein localises to the secreted. It carries out the reaction [(1-&gt;4)-beta-D-glucosyl]n+m + reduced acceptor + O2 = 4-dehydro-beta-D-glucosyl-[(1-&gt;4)-beta-D-glucosyl]n-1 + [(1-&gt;4)-beta-D-glucosyl]m + acceptor + H2O.. Its function is as follows. Lytic polysaccharide monooxygenase (LPMO) that depolymerizes crystalline and amorphous polysaccharides via the oxidation of scissile alpha- or beta-(1-4)-glycosidic bonds, yielding C1 or C4 oxidation products. Catalysis by LPMOs requires the reduction of the active-site copper from Cu(II) to Cu(I) by a reducing agent and H(2)O(2) or O(2) as a cosubstrate. Acts preferentially on crystalline regions of cellulose such as highly crystalline algae cellulose. This is AA9 family lytic polysaccharide monooxygenase G from Emericella nidulans (strain FGSC A4 / ATCC 38163 / CBS 112.46 / NRRL 194 / M139) (Aspergillus nidulans).